Reading from the N-terminus, the 333-residue chain is Ferrochelatase (333 aa).

Residues His202 and Glu284 each contribute to the Fe cation site.

Belongs to the ferrochelatase family.

It is found in the cytoplasm. The catalysed reaction is heme b + 2 H(+) = protoporphyrin IX + Fe(2+). It participates in porphyrin-containing compound metabolism; protoheme biosynthesis; protoheme from protoporphyrin-IX: step 1/1. In terms of biological role, catalyzes the ferrous insertion into protoporphyrin IX. This is Ferrochelatase from Francisella tularensis subsp. mediasiatica (strain FSC147).